A 292-amino-acid polypeptide reads, in one-letter code: Ribosomal protein L11 methyltransferase (292 aa).

S-adenosyl-L-methionine-binding residues include Thr-136, Gly-159, Asp-181, and Asn-228.

This sequence belongs to the methyltransferase superfamily. PrmA family.

It is found in the cytoplasm. It carries out the reaction L-lysyl-[protein] + 3 S-adenosyl-L-methionine = N(6),N(6),N(6)-trimethyl-L-lysyl-[protein] + 3 S-adenosyl-L-homocysteine + 3 H(+). Its function is as follows. Methylates ribosomal protein L11. This chain is Ribosomal protein L11 methyltransferase, found in Rhizobium rhizogenes (strain K84 / ATCC BAA-868) (Agrobacterium radiobacter).